The chain runs to 422 residues: m7GpppN-mRNA hydrolase (422 aa).

One can recognise a Nudix hydrolase domain in the interval 95–226; it reads MGVPTYGAII…KLGLAPNKFF (132 aa). The short motif at 129 to 150 is the Nudix box element; it reads GKVNKEEAPHDCAAREVFEETG. Residues Glu144 and Glu148 each coordinate Mn(2+). Residues Ser246, Ser247, Ser249, Ser276, and Ser284 each carry the phosphoserine modification. Residues 247 to 347 are disordered; it reads SDSDNGFSSA…GVHGQPAKQQ (101 aa). Positions 249 to 258 are enriched in low complexity; that stretch reads SDNGFSSAGS. Basic and acidic residues predominate over residues 303–312; it reads NHGEVSDLLK.

It belongs to the Nudix hydrolase family. DCP2 subfamily. In terms of assembly, found in a mRNA decay complex with LSM1, LSM3, LSM4, EXOSC2, EXOSC4, EXOSC10, PARN, XRN1, CNOT6, UPF1, UPF2 and UPF3B. Forms a complex with DCP1A, EDC3, DDX6 and EDC4/HEDLS, within this complex directly interacts with EDC4/HEDLS. Interacts with DPC1B, UPF1, UPF2 and UPF3B. Associates with polysomes. Interacts (via N-terminus and C-terminus) with TRIM21 (via N-terminus and C-terminus). Interacts with LIMD1, WTIP and AJUBA. Interacts with DDX17 in an RNA-dependent manner. Interacts with ZC3HAV1. Interacts with APOBEC3G in an RNA-dependent manner. Interacts with ZFP36L1 (via N-terminus). Interacts with NBDY. Requires Mn(2+) as cofactor. Mg(2+) serves as cofactor. Strongly expressed in brain and testis. Weakly expressed in lung. Not detected in heart, liver, kidney and muscle (at protein level).

It localises to the cytoplasm. Its subcellular location is the P-body. The protein localises to the nucleus. It catalyses the reaction a 5'-end (N(7)-methyl 5'-triphosphoguanosine)-ribonucleoside in mRNA + H2O = N(7)-methyl-GDP + a 5'-end phospho-ribonucleoside in mRNA + 2 H(+). Functionally, decapping metalloenzyme that catalyzes the cleavage of the cap structure on mRNAs. Removes the 7-methyl guanine cap structure from mRNA molecules, yielding a 5'-phosphorylated mRNA fragment and 7m-GDP. Necessary for the degradation of mRNAs, both in normal mRNA turnover and in nonsense-mediated mRNA decay. Plays a role in replication-dependent histone mRNA degradation. Has higher activity towards mRNAs that lack a poly(A) tail. Has no activity towards a cap structure lacking an RNA moiety. The presence of a N(6)-methyladenosine methylation at the second transcribed position of mRNAs (N(6),2'-O-dimethyladenosine cap; m6A(m)) provides resistance to DCP2-mediated decapping. Blocks autophagy in nutrient-rich conditions by repressing the expression of ATG-related genes through degradation of their transcripts. This Mus musculus (Mouse) protein is m7GpppN-mRNA hydrolase (Dcp2).